Reading from the N-terminus, the 553-residue chain is Terpene synthase 16 (553 aa).

Mg(2+)-binding residues include D303, D307, and E457. Positions 303–307 (DDTYD) match the DDXXD motif motif.

It belongs to the terpene synthase family. Tpsa subfamily. The cofactor is Mg(2+). Mn(2+) is required as a cofactor. Expressed in leaves, trichomes and flowers.

It functions in the pathway secondary metabolite biosynthesis; terpenoid biosynthesis. Its function is as follows. Sesquiterpene synthase involved in the biosynthesis of volatile compounds. No activity detected with geranyl diphosphate (GPP) and farnesyl diphosphate (FPP) as substrates. The chain is Terpene synthase 16 from Solanum lycopersicum (Tomato).